The following is a 231-amino-acid chain: Ribonuclease 3 (231 aa).

Positions 5 to 134 (QKKLKNDYGL…FLGALFIDQG (130 aa)) constitute an RNase III domain. Position 47 (Glu47) interacts with Mg(2+). Residue Asp51 is part of the active site. Asn120 and Glu123 together coordinate Mg(2+). Glu123 is an active-site residue. The region spanning 160-229 (DYKTELQEVL…AENAIKGQNH (70 aa)) is the DRBM domain.

The protein belongs to the ribonuclease III family. As to quaternary structure, homodimer. Mg(2+) is required as a cofactor.

The protein localises to the cytoplasm. It carries out the reaction Endonucleolytic cleavage to 5'-phosphomonoester.. Its function is as follows. Digests double-stranded RNA. Involved in the processing of primary rRNA transcript to yield the immediate precursors to the large and small rRNAs (23S and 16S). Processes some mRNAs, and tRNAs when they are encoded in the rRNA operon. Processes pre-crRNA and tracrRNA of type II CRISPR loci if present in the organism. The chain is Ribonuclease 3 from Lactococcus lactis subsp. lactis (strain IL1403) (Streptococcus lactis).